A 1275-amino-acid polypeptide reads, in one-letter code: ATP-dependent helicase/nuclease subunit A (1275 aa).

The UvrD-like helicase ATP-binding domain maps to 4–481 (PKWTKEQLEV…IMLYKNFRSR (478 aa)). Residue 25 to 32 (AAAGSGKT) coordinates ATP. In terms of domain architecture, UvrD-like helicase C-terminal spans 531 to 839 (TEIHLIQKDN…RIMSIHKSKG (309 aa)).

Belongs to the helicase family. AddA subfamily. In terms of assembly, heterodimer of AddA and AddB/RexB. It depends on Mg(2+) as a cofactor.

It carries out the reaction Couples ATP hydrolysis with the unwinding of duplex DNA by translocating in the 3'-5' direction.. It catalyses the reaction ATP + H2O = ADP + phosphate + H(+). Its function is as follows. The heterodimer acts as both an ATP-dependent DNA helicase and an ATP-dependent, dual-direction single-stranded exonuclease. Recognizes the chi site generating a DNA molecule suitable for the initiation of homologous recombination. The AddA nuclease domain is required for chi fragment generation; this subunit has the helicase and 3' -&gt; 5' nuclease activities. This Clostridioides difficile (strain 630) (Peptoclostridium difficile) protein is ATP-dependent helicase/nuclease subunit A.